Here is a 330-residue protein sequence, read N- to C-terminus: Low-redox potential peroxidase (330 aa).

An N-terminal signal peptide occupies residues 1–24 (MRSSTHIFVSFVVYCGVFVTSAIA). Asn27 carries N-linked (GlcNAc...) asparagine glycosylation. 3 disulfides stabilise this stretch: Cys34/Cys285, Cys54/Cys123, and Cys251/Cys314. Residues Gly69, Asp71, and Ser73 each coordinate Ca(2+). Position 178 (His178) interacts with heme b. Ca(2+) contacts are provided by Ser179, Asp196, Thr198, and Asp203.

It belongs to the peroxidase family. Ligninase subfamily. Ca(2+) is required as a cofactor. Heme b serves as cofactor.

The protein localises to the secreted. The enzyme catalyses 2 a phenolic donor + H2O2 = 2 a phenolic radical donor + 2 H2O. In terms of biological role, can oxidize the lignin redox mediator veratryl alcohol to veratryl aldehyde. May be involved in oxidation of lignocellulose substrates. This is Low-redox potential peroxidase (LnP) from Taiwanofungus camphoratus (Poroid brown-rot fungus).